Consider the following 142-residue polypeptide: Arginine decarboxylase proenzyme (142 aa).

Catalysis depends on S81, which acts as the Schiff-base intermediate with substrate; via pyruvic acid. Pyruvic acid (Ser); by autocatalysis is present on S81. H86 acts as the Proton acceptor; for processing activity in catalysis. Catalysis depends on C101, which acts as the Proton donor; for catalytic activity.

Belongs to the prokaryotic AdoMetDC family. Type 1 subfamily. In terms of assembly, heterooctamer of four alpha and four beta chains arranged as a tetramer of alpha/beta heterodimers. Requires pyruvate as cofactor. In terms of processing, is synthesized initially as an inactive proenzyme. Formation of the active enzyme involves a self-maturation process in which the active site pyruvoyl group is generated from an internal serine residue via an autocatalytic post-translational modification. Two non-identical subunits are generated from the proenzyme in this reaction, and the pyruvate is formed at the N-terminus of the alpha chain, which is derived from the carboxyl end of the proenzyme. The post-translation cleavage follows an unusual pathway, termed non-hydrolytic serinolysis, in which the side chain hydroxyl group of the serine supplies its oxygen atom to form the C-terminus of the beta chain, while the remainder of the serine residue undergoes an oxidative deamination to produce ammonia and the pyruvoyl group blocking the N-terminus of the alpha chain.

It carries out the reaction L-arginine + H(+) = agmatine + CO2. The protein operates within amine and polyamine biosynthesis; agmatine biosynthesis; agmatine from L-arginine: step 1/1. Specifically catalyzes the decarboxylation of L-arginine to agmatine. Has no S-adenosylmethionine decarboxylase (AdoMetDC) activity. The protein is Arginine decarboxylase proenzyme of Hyperthermus butylicus (strain DSM 5456 / JCM 9403 / PLM1-5).